The following is a 357-amino-acid chain: Protein RecA (357 aa).

71-78 (GPESSGKT) contributes to the ATP binding site.

This sequence belongs to the RecA family.

Its subcellular location is the cytoplasm. Its function is as follows. Can catalyze the hydrolysis of ATP in the presence of single-stranded DNA, the ATP-dependent uptake of single-stranded DNA by duplex DNA, and the ATP-dependent hybridization of homologous single-stranded DNAs. It interacts with LexA causing its activation and leading to its autocatalytic cleavage. The protein is Protein RecA of Ehrlichia ruminantium (strain Gardel).